Here is a 563-residue protein sequence, read N- to C-terminus: Arginine--tRNA ligase (563 aa).

The 'HIGH' region motif lies at Pro-120–His-130.

It belongs to the class-I aminoacyl-tRNA synthetase family. As to quaternary structure, monomer.

Its subcellular location is the cytoplasm. The enzyme catalyses tRNA(Arg) + L-arginine + ATP = L-arginyl-tRNA(Arg) + AMP + diphosphate. The sequence is that of Arginine--tRNA ligase from Clostridium acetobutylicum (strain ATCC 824 / DSM 792 / JCM 1419 / IAM 19013 / LMG 5710 / NBRC 13948 / NRRL B-527 / VKM B-1787 / 2291 / W).